A 274-amino-acid chain; its full sequence is Protein CIMAP1C (274 aa).

A disordered region spans residues 1–27 (MKLPKGTRSSVYFAQHPEKEPLPSRQE). A compositionally biased stretch (basic and acidic residues) spans 16–27 (HPEKEPLPSRQE). STPGR repeat units follow at residues 199 to 224 (PGPT…MAKR) and 235 to 260 (PGPG…MGIK).

The protein belongs to the CIMAP family.

The polypeptide is Protein CIMAP1C (Homo sapiens (Human)).